Consider the following 330-residue polypeptide: tRNA-modifying protein YgfZ (330 aa).

Folate contacts are provided by Trp-28 and Trp-190.

It belongs to the tRNA-modifying YgfZ family.

The protein localises to the cytoplasm. Folate-binding protein involved in regulating the level of ATP-DnaA and in the modification of some tRNAs. It is probably a key factor in regulatory networks that act via tRNA modification, such as initiation of chromosomal replication. The polypeptide is tRNA-modifying protein YgfZ (Yersinia pseudotuberculosis serotype IB (strain PB1/+)).